The primary structure comprises 244 residues: Cyclin-Q (244 aa).

It belongs to the cyclin family. Cyclin-like FAM58 subfamily.

Functionally, may be an activating cyclin for the cyclin-associated kinase CDK10. This Xenopus laevis (African clawed frog) protein is Cyclin-Q (ccnq).